The primary structure comprises 1081 residues: DNA polymerase catalytic subunit (1081 aa).

This sequence belongs to the DNA polymerase type-B family. In terms of assembly, forms a complex with the ssDNA-binding protein UL29, the DNA polymerase processivity factor, and the alkaline exonuclease. Interacts with the putative helicase-primase complex subunit UL8; this interaction may coordinate leading and lagging strand DNA synthesis at the replication fork.

The protein localises to the host nucleus. It carries out the reaction DNA(n) + a 2'-deoxyribonucleoside 5'-triphosphate = DNA(n+1) + diphosphate. The enzyme catalyses Endonucleolytic cleavage to 5'-phosphomonoester.. Functionally, replicates viral genomic DNA. The replication complex is composed of six viral proteins: the DNA polymerase, processivity factor, primase, primase-associated factor, helicase, and ssDNA-binding protein. Additionally, the polymerase contains an intrinsic ribonuclease H (RNase H) activity that specifically degrades RNA/DNA heteroduplexes or duplex DNA substrates in the 5' to 3' direction. Therefore, it can catalyze the excision of the RNA primers that initiate the synthesis of Okazaki fragments at a replication fork during viral DNA replication. This is DNA polymerase catalytic subunit (UL30) from Psittacid herpesvirus 1 (isolate Amazon parrot/-/97-0001/1997) (PsHV-1).